Consider the following 154-residue polypeptide: Myoglobin (154 aa).

The Globin domain occupies 2 to 148 (GLSDGEWQLV…FRNDIAAKYK (147 aa)). S4 is subject to Phosphoserine. H65 is a nitrite binding site. H65 serves as a coordination point for O2. T68 carries the phosphothreonine modification. H94 serves as a coordination point for heme b.

The protein belongs to the globin family. As to quaternary structure, monomeric.

The protein resides in the cytoplasm. It is found in the sarcoplasm. The enzyme catalyses Fe(III)-heme b-[protein] + nitric oxide + H2O = Fe(II)-heme b-[protein] + nitrite + 2 H(+). It catalyses the reaction H2O2 + AH2 = A + 2 H2O. Monomeric heme protein which primary function is to store oxygen and facilitate its diffusion within muscle tissues. Reversibly binds oxygen through a pentacoordinated heme iron and enables its timely and efficient release as needed during periods of heightened demand. Depending on the oxidative conditions of tissues and cells, and in addition to its ability to bind oxygen, it also has a nitrite reductase activity whereby it regulates the production of bioactive nitric oxide. Under stress conditions, like hypoxia and anoxia, it also protects cells against reactive oxygen species thanks to its pseudoperoxidase activity. The polypeptide is Myoglobin (MB) (Proechimys guairae (Guaira spiny rat)).